The following is a 244-amino-acid chain: tRNA pseudouridine synthase A (244 aa).

The Nucleophile role is filled by D52. Residue Y111 participates in substrate binding.

It belongs to the tRNA pseudouridine synthase TruA family. In terms of assembly, homodimer.

The enzyme catalyses uridine(38/39/40) in tRNA = pseudouridine(38/39/40) in tRNA. Functionally, formation of pseudouridine at positions 38, 39 and 40 in the anticodon stem and loop of transfer RNAs. In Thermosipho melanesiensis (strain DSM 12029 / CIP 104789 / BI429), this protein is tRNA pseudouridine synthase A.